A 193-amino-acid chain; its full sequence is Superoxide dismutase [Fe] (193 aa).

4 residues coordinate Fe cation: H27, H74, D157, and H161.

This sequence belongs to the iron/manganese superoxide dismutase family. In terms of assembly, homodimer. The cofactor is Fe cation.

The catalysed reaction is 2 superoxide + 2 H(+) = H2O2 + O2. In terms of biological role, destroys superoxide anion radicals which are normally produced within the cells and which are toxic to biological systems. Partially complements double sodA-sodB deletions in E.coli. This chain is Superoxide dismutase [Fe], found in Pseudomonas aeruginosa (strain ATCC 15692 / DSM 22644 / CIP 104116 / JCM 14847 / LMG 12228 / 1C / PRS 101 / PAO1).